The following is a 250-amino-acid chain: Pyridoxine 5'-phosphate synthase (250 aa).

Asn-8 and Arg-19 together coordinate 3-amino-2-oxopropyl phosphate. His-44 serves as the catalytic Proton acceptor. The 1-deoxy-D-xylulose 5-phosphate site is built by Arg-46 and His-51. Residue Glu-76 is the Proton acceptor of the active site. Thr-106 serves as a coordination point for 1-deoxy-D-xylulose 5-phosphate. His-200 serves as the catalytic Proton donor. Residues Asp-201 and 223-224 (GH) each bind 3-amino-2-oxopropyl phosphate.

This sequence belongs to the PNP synthase family. In terms of assembly, homooctamer; tetramer of dimers.

It is found in the cytoplasm. The enzyme catalyses 3-amino-2-oxopropyl phosphate + 1-deoxy-D-xylulose 5-phosphate = pyridoxine 5'-phosphate + phosphate + 2 H2O + H(+). It participates in cofactor biosynthesis; pyridoxine 5'-phosphate biosynthesis; pyridoxine 5'-phosphate from D-erythrose 4-phosphate: step 5/5. In terms of biological role, catalyzes the complicated ring closure reaction between the two acyclic compounds 1-deoxy-D-xylulose-5-phosphate (DXP) and 3-amino-2-oxopropyl phosphate (1-amino-acetone-3-phosphate or AAP) to form pyridoxine 5'-phosphate (PNP) and inorganic phosphate. The polypeptide is Pyridoxine 5'-phosphate synthase (Rhizobium meliloti (strain 1021) (Ensifer meliloti)).